The chain runs to 163 residues: Neurotrophin-3 (163 aa).

Residues Ile-1–Ser-3 form the signal peptide. Residues Thr-4–Arg-119 constitute a propeptide that is removed on maturation. The N-linked (GlcNAc...) asparagine glycan is linked to Asn-112.

The protein belongs to the NGF-beta family.

It localises to the secreted. Its function is as follows. Seems to promote the survival of visceral and proprioceptive sensory neurons. The protein is Neurotrophin-3 (NTF3) of Eryx colubrinus colubrinus.